A 572-amino-acid chain; its full sequence is EF-hand calcium-binding domain-containing protein 12 (572 aa).

2 disordered regions span residues 62 to 85 and 146 to 169; these read VPRKEDQTPLNPASQPQAPPKPIP and EQSAQPNASQATTRTTRKKAPRLS. The region spanning 196-231 is the EF-hand domain; that stretch reads SRKIKILEIFHKVGQGENQRITREEFIAAVKAVGVP. Glutamate 212 lines the Ca(2+) pocket.

The sequence is that of EF-hand calcium-binding domain-containing protein 12 (EFCAB12) from Homo sapiens (Human).